A 508-amino-acid chain; its full sequence is MSVQVAAPGSTGLGPERLNPEELVRQTRQVVQGLEALRAEHHSLAGHLAEALAGPGPVAGVELLEEKQQVVNHSLEAIELGLGEAQVLLALSAHVSVLEAEKQRLRAQARRLAQENTWLREELEETQRRLRASEEAVAQLEEEKSHLQFLGQLRQYDPPEESQRPESPPRRDSLASLFPSEEEEKKGPEAAGAAAAQQGGYEIPARLRTLHNLVIQYAGQGRYEVAVPLCRQALEDLERSSGHCHPDVATMLNILALVYRDQNKYKEATELLHDALQIREQTLGPEHPAVAATLNNLAVLYGKRGRYREAEPLCQRALEIREKVLGADHPDVAKQLNNLALLCQNQGKFQDVERHYARALSIYEALGGPQDPNVAKTKNNLASAYLKQNKYQQAEELYKEILSQEALPAPLGAPQGGTAGDTQQQVLRRSSSFSKLRESIRRGSEKLVSRLRGEGMAGAAGMKRAMSLNMLNVDGPRAARTQLSQLSTRHLSEAPRTLSISTQDLSPR.

The disordered stretch occupies residues M1–P20. Residues L88–L150 are a coiled coil. Residues R154–Q197 are disordered. The segment covering E161 to S173 has biased composition (basic and acidic residues). S173 carries the phosphoserine modification. 5 TPR repeats span residues L207–S240, A249–T282, A291–V324, A333–L366, and A375–P408. Positions A409–R441 are disordered. Positions G420–S434 are enriched in polar residues. S467 is subject to Phosphoserine. The interval L486–R508 is disordered. A compositionally biased stretch (polar residues) spans L498–R508. T502 carries the post-translational modification Phosphothreonine. Residue S506 is modified to Phosphoserine.

It belongs to the kinesin light chain family. As to quaternary structure, oligomer composed of two heavy chains and two light chains. Associates with microtubulin in an ATP-dependent manner. Interacts with KIF5C. Interacts with ODF1. Interacts with LRGUK. Interacts with VDAC2. Expressed in postmeiotic male germ cells (at protein level). Expressed in the testes (at protein level). Expressed in spleen, intestine, brain and ovary.

It is found in the cytoplasm. The protein resides in the cytoskeleton. The protein localises to the mitochondrion. In terms of biological role, kinesin is a microtubule-associated force-producing protein that may play a role in organelle transport. Plays a role during spermiogenesis in the development of the sperm tail midpiece and in the normal function of spermatozoa. May play a role in the formation of the mitochondrial sheath formation in the developing spermatid midpiece. The protein is Kinesin light chain 3 (Klc3) of Mus musculus (Mouse).